The following is a 505-amino-acid chain: Aminoaldehyde dehydrogenase 1a (505 aa).

Asp101 lines the Na(+) pocket. Residues 161-163 (TPW) and 187-190 (KPSE) each bind NAD(+). Leu191 is a binding site for Na(+). NAD(+) contacts are provided by residues 241–244 (SFET) and Glu262. Residue Glu262 is the Proton acceptor of the active site. Residue Cys296 is the Nucleophile of the active site. The NAD(+) site is built by Glu395 and Trp461.

It belongs to the aldehyde dehydrogenase family. As to quaternary structure, forms homodimers.

It carries out the reaction 4-aminobutanal + NAD(+) + H2O = 4-aminobutanoate + NADH + 2 H(+). The enzyme catalyses 3-aminopropanal + NAD(+) + H2O = beta-alanine + NADH + 2 H(+). It catalyses the reaction 4-(trimethylamino)butanal + NAD(+) + H2O = 4-(trimethylamino)butanoate + NADH + 2 H(+). The catalysed reaction is 4-guanidinobutanal + NAD(+) + H2O = 4-guanidinobutanoate + NADH + 2 H(+). It carries out the reaction betaine aldehyde + NAD(+) + H2O = glycine betaine + NADH + 2 H(+). It functions in the pathway amine and polyamine biosynthesis; betaine biosynthesis via choline pathway; betaine from betaine aldehyde: step 1/1. Functionally, dehydrogenase that catalyzes the oxidation of several aminoaldehydes. Metabolizes and detoxifies aldehyde products of polyamine degradation to non-toxic amino acids. Catalyzes the oxidation of 4-aminobutanal and 3-aminopropanal to 4-aminobutanoate and beta-alanine, respectively. Catalyzes the oxidation of 4-(trimethylamino)butanal and 4-guanidinobutanal to 4-trimethylammoniobutanoate and 4-guanidinobutanoate, respectively. Catalyzes the oxidation of betaine aldehyde to glycine betaine. Dehydrogenase that catalyzes the oxidation of several aminoaldehydes. Catalyzes the oxidation of betaine aldehyde to glycine betaine. Catalyzes the oxidation of 4-(trimethylamino)butanal to 4-trimethylammoniobutanoate. In Zea mays (Maize), this protein is Aminoaldehyde dehydrogenase 1a.